The following is a 163-amino-acid chain: Transcription elongation factor GreA (163 aa).

A coiled-coil region spans residues 45 to 65 (NAEYHAAREKQAFIEARINEL).

It belongs to the GreA/GreB family.

Its function is as follows. Necessary for efficient RNA polymerase transcription elongation past template-encoded arresting sites. The arresting sites in DNA have the property of trapping a certain fraction of elongating RNA polymerases that pass through, resulting in locked ternary complexes. Cleavage of the nascent transcript by cleavage factors such as GreA or GreB allows the resumption of elongation from the new 3'terminus. GreA releases sequences of 2 to 3 nucleotides. In Helicobacter hepaticus (strain ATCC 51449 / 3B1), this protein is Transcription elongation factor GreA.